Reading from the N-terminus, the 393-residue chain is Succinate--CoA ligase [ADP-forming] subunit beta (393 aa).

The ATP-grasp domain occupies Arg-9–Ala-237. ATP is bound by residues Lys-45, Gly-52–Gly-54, Glu-92, Pro-95, and Glu-100. Mg(2+) is bound by residues Asn-192 and Asp-206. Substrate contacts are provided by residues Asn-257 and Gly-319–Thr-321.

This sequence belongs to the succinate/malate CoA ligase beta subunit family. Heterotetramer of two alpha and two beta subunits. It depends on Mg(2+) as a cofactor.

It catalyses the reaction succinate + ATP + CoA = succinyl-CoA + ADP + phosphate. The catalysed reaction is GTP + succinate + CoA = succinyl-CoA + GDP + phosphate. Its pathway is carbohydrate metabolism; tricarboxylic acid cycle; succinate from succinyl-CoA (ligase route): step 1/1. Succinyl-CoA synthetase functions in the citric acid cycle (TCA), coupling the hydrolysis of succinyl-CoA to the synthesis of either ATP or GTP and thus represents the only step of substrate-level phosphorylation in the TCA. The beta subunit provides nucleotide specificity of the enzyme and binds the substrate succinate, while the binding sites for coenzyme A and phosphate are found in the alpha subunit. The chain is Succinate--CoA ligase [ADP-forming] subunit beta from Streptomyces griseus subsp. griseus (strain JCM 4626 / CBS 651.72 / NBRC 13350 / KCC S-0626 / ISP 5235).